The following is a 990-amino-acid chain: Leucine--tRNA ligase (990 aa).

Residues 74-85 carry the 'HIGH' region motif; sequence PYPSGKGLHVGH. The segment at 573-602 is disordered; it reads LPINLPDVPDYSPKTFDPEDAESDPEAPLS. The 'KMSKS' region motif lies at 763 to 767; sequence KMGKS. K766 provides a ligand contact to ATP.

The protein belongs to the class-I aminoacyl-tRNA synthetase family.

Its subcellular location is the cytoplasm. It carries out the reaction tRNA(Leu) + L-leucine + ATP = L-leucyl-tRNA(Leu) + AMP + diphosphate. In Bifidobacterium adolescentis (strain ATCC 15703 / DSM 20083 / NCTC 11814 / E194a), this protein is Leucine--tRNA ligase.